The following is a 327-amino-acid chain: MQQLEEVVGQARAEIEGVSDIAALDEIRVKYLGKKGFFTEQMKGLGALSAEERPAAGAVINQAKQQVQDALNERREALEIAVLNQKLAAETIDVSLPGRRIENGGLHPVTRTIERIERLFGEMGFKVARGPEIEDGFHNFDALNIPAHHPARTDHDTFYFNPDLMLRTHTSGVQIRTMEHQQPPIRIIAPGRVYRNDYDMTHTPMFHQVEGLLVDEHASFTELKGILHDFLRNYFEEDLTIRFRPSYFPFTEPSAEVDVMGKNGKWLEVLGCGMVHPNVLRSVGIDPEKYSGFAFGMGVERLTMLRYGVNDLRAFFENDLRFLKQFK.

Glu-252 is a binding site for Mg(2+).

The protein belongs to the class-II aminoacyl-tRNA synthetase family. Phe-tRNA synthetase alpha subunit type 1 subfamily. Tetramer of two alpha and two beta subunits. Mg(2+) is required as a cofactor.

It localises to the cytoplasm. The enzyme catalyses tRNA(Phe) + L-phenylalanine + ATP = L-phenylalanyl-tRNA(Phe) + AMP + diphosphate + H(+). The polypeptide is Phenylalanine--tRNA ligase alpha subunit (Aeromonas hydrophila subsp. hydrophila (strain ATCC 7966 / DSM 30187 / BCRC 13018 / CCUG 14551 / JCM 1027 / KCTC 2358 / NCIMB 9240 / NCTC 8049)).